Reading from the N-terminus, the 277-residue chain is Putative hydro-lyase BP1875 (277 aa).

Belongs to the D-glutamate cyclase family.

The sequence is that of Putative hydro-lyase BP1875 from Bordetella pertussis (strain Tohama I / ATCC BAA-589 / NCTC 13251).